Reading from the N-terminus, the 275-residue chain is Dihydroxyacetone phosphatase (275 aa).

The active-site Nucleophile is Asp10. Residues Asp10, Asp12, and Asp206 each contribute to the Mg(2+) site. The active-site Proton donor/acceptor is Asp12.

This sequence belongs to the HAD-like hydrolase superfamily. Homohexamer. Requires Mg(2+) as cofactor.

The catalysed reaction is dihydroxyacetone phosphate + H2O = dihydroxyacetone + phosphate. Catalyzes dephosphorylation of dihydroxyacetone phosphate (DHAP) to produce 1,3-dihydroxyacetone (DHA). Is the main enzyme responsible for DHA production from catabolism of sugars (glucose, fructose, and sucrose) in C.glutamicum. Displays no activity toward nucleoside monophosphates (AMP, CMP, GMP, or UMP). In Corynebacterium glutamicum (strain R), this protein is Dihydroxyacetone phosphatase.